A 303-amino-acid polypeptide reads, in one-letter code: UPF0282 protein PAE3680 (303 aa).

This sequence belongs to the UPF0282 family.

This is UPF0282 protein PAE3680 from Pyrobaculum aerophilum (strain ATCC 51768 / DSM 7523 / JCM 9630 / CIP 104966 / NBRC 100827 / IM2).